A 37-amino-acid polypeptide reads, in one-letter code: Large ribosomal subunit protein bL36c (37 aa).

This sequence belongs to the bacterial ribosomal protein bL36 family.

It is found in the plastid. It localises to the chloroplast. The chain is Large ribosomal subunit protein bL36c from Tetradesmus obliquus (Green alga).